Here is a 78-residue protein sequence, read N- to C-terminus: Ubiquitin-like protein 1 (78 aa).

The protein belongs to the ubiquitin family.

The polypeptide is Ubiquitin-like protein 1 (ubl1) (Schizosaccharomyces pombe (strain 972 / ATCC 24843) (Fission yeast)).